The sequence spans 1401 residues: MAP kinase kinase kinase wis4 (1401 aa).

Disordered regions lie at residues 67–99 (HIPLTPSHSGQSEKLMSTRTSHSPYISPTMSYT) and 176–205 (QDSISDKSLPSTNQSLHHSEEDTESDNDFS). 2 stretches are compositionally biased toward polar residues: residues 72 to 99 (PSHSGQSEKLMSTRTSHSPYISPTMSYT) and 176 to 191 (QDSISDKSLPSTNQSL). In terms of domain architecture, Protein kinase spans 1037–1306 (WQQGHFVRSG…AVDLLTHPWI (270 aa)). ATP-binding positions include 1043–1051 (VRSGMFGDV) and lysine 1066. The active-site Proton acceptor is the aspartate 1161.

It belongs to the protein kinase superfamily. STE Ser/Thr protein kinase family. MAP kinase kinase kinase subfamily.

The catalysed reaction is L-seryl-[protein] + ATP = O-phospho-L-seryl-[protein] + ADP + H(+). It catalyses the reaction L-threonyl-[protein] + ATP = O-phospho-L-threonyl-[protein] + ADP + H(+). Involved in a signal transduction pathway that is activated in under conditions of heat shock, oxidative stress or limited nutrition. Unlike win1, it is not activated by changes in the osmolarity of the extracellular environment. Activates the wis1 MAP kinase kinase by phosphorylation. The polypeptide is MAP kinase kinase kinase wis4 (wis4) (Schizosaccharomyces pombe (strain 972 / ATCC 24843) (Fission yeast)).